We begin with the raw amino-acid sequence, 408 residues long: Cytotoxic granule-associated RNA binding protein tiar-1 (408 aa).

RRM domains lie at 46-121, 135-213, and 241-312; these read RTLY…WAVE, FHVF…WATR, and TSVY…WGKT.

Expressed in the germline and also in somatic tissues. Expressed in Ggonads and oocytes. Expression is slightly reduced in the most proximal oocytes, especially the -1 oocyte. Aggregates mostly in the head neurons, muscles, intestine, vulval and hypodermal cells during heat shock. Expressed only in the intestine as a response to heat shock, starvation and dietary restriction.

It localises to the cytoplasm. Its subcellular location is the nucleus. The protein resides in the stress granule. Its function is as follows. Acts downstream of ced-9 in the induction of germline apoptosis under different stress conditions including starvation, osmotic, oxidative, heat shock and UV stress. Plays a role in the formation of stress granules in response to heat shock and oxidative stress but not in response to osmotic stress. Required for the formation of stress granules in the core gonad but may not play a critical role in this process in the oocytes. Plays an important role in the formation of stress granules in the embryo. Protects female germ cells and embryos from heat shock. This is Cytotoxic granule-associated RNA binding protein tiar-1 from Caenorhabditis elegans.